A 69-amino-acid chain; its full sequence is Putative F-box protein At2g33705 (69 aa).

Residues 14–59 enclose the F-box domain; sequence GVNLEQIPYDLVLEILLKLSAKSIARFRCVSKLWDSTFRSRYFTEL.

The chain is Putative F-box protein At2g33705 from Arabidopsis thaliana (Mouse-ear cress).